Here is a 254-residue protein sequence, read N- to C-terminus: Mediator of RNA polymerase II transcription subunit 4 (254 aa).

Residues 72-114 (RVHQEMQSLEKEVEKRDSDIQQLQKQLKEAEHILATAVYQAKE) adopt a coiled-coil conformation. Residues 215-254 (ILPPHHGNDFGLEPPGHNKENEDDVEAMSTDSSSSSSDSD) are disordered. A compositionally biased stretch (low complexity) spans 243 to 254 (STDSSSSSSDSD).

This sequence belongs to the Mediator complex subunit 4 family. As to quaternary structure, component of the Mediator complex.

The protein localises to the nucleus. In terms of biological role, component of the Mediator complex, a coactivator involved in the regulated transcription of nearly all RNA polymerase II-dependent genes. Mediator functions as a bridge to convey information from gene-specific regulatory proteins to the basal RNA polymerase II transcription machinery. Mediator is recruited to promoters by direct interactions with regulatory proteins and serves as a scaffold for the assembly of a functional preinitiation complex with RNA polymerase II and the general transcription factors. The chain is Mediator of RNA polymerase II transcription subunit 4 (med4) from Danio rerio (Zebrafish).